We begin with the raw amino-acid sequence, 432 residues long: D-amino acid dehydrogenase (432 aa).

3–17 (VVILGSGVVGVTSAW) contacts FAD.

Belongs to the DadA oxidoreductase family. FAD serves as cofactor.

It catalyses the reaction a D-alpha-amino acid + A + H2O = a 2-oxocarboxylate + AH2 + NH4(+). It functions in the pathway amino-acid degradation; D-alanine degradation; NH(3) and pyruvate from D-alanine: step 1/1. Functionally, oxidative deamination of D-amino acids. This Salmonella arizonae (strain ATCC BAA-731 / CDC346-86 / RSK2980) protein is D-amino acid dehydrogenase.